A 131-amino-acid chain; its full sequence is UPF0102 protein YraN (131 aa).

Over residues 1-19 (MATVPTRSGSPRQLTTKQT) the composition is skewed to polar residues. The interval 1–21 (MATVPTRSGSPRQLTTKQTGD) is disordered.

This sequence belongs to the UPF0102 family.

The polypeptide is UPF0102 protein YraN (Shigella flexneri serotype 5b (strain 8401)).